A 533-amino-acid polypeptide reads, in one-letter code: MPMTMSQAFIGNFLGNSPKWYKIAILSFLIINPILFFYVSPFVAGWVLVLEFIFTLAMALKCYPLQPGGLLAIQAVAIGMTSASQVLHEIEANLEVLLLLVFMVAGIYFMKQLLLFAFTKMITKVRSKILVSLMFCLASAFLSAFLDALTVIAVIITVAVGFYSIYHKVASGKDFSADHDHTSEGKNEDGENQLNEEELESFRGFLRNLLMHAGVGTALGGVCTMVGEPQNLIIAAQANWQFGEFAIRMSPVTVPVLFAGILTCFLVEKLRWFGYGAQLPEAVHKILCDYAAYEDARRTNKDKMKLVIQAFVGVWLIAGLALHLASVGLIGLSVIILTTAFNGITDEHALGKAFEEALPFTALLAVFFAVVAVIIDQQLFGPVIQWALNHEGNTQLVIFYIANGLLSMVSDNVFVGTVYINEVKAALINGQITRDQFDLLAVAINTGTNLPSVATPNGQAAFLFLLTSALAPLIRLSYGRMVWMALPYTIVLSIVGVMAIESGFLEQMTQYFYDSHAIIHHSVKEALAPAAAH.

Helical transmembrane passes span 10–30 (IGNF…SFLI), 67–87 (PGGL…SQVL), 96–116 (VLLL…LLLF), 131–165 (VSLM…FYSI), 209–229 (LLMH…VGEP), 247–267 (IRMS…CFLV), 310–330 (AFVG…VGLI), 355–375 (EEAL…AVII), 396–416 (LVIF…VFVG), 454–474 (ATPN…APLI), and 481–501 (MVWM…MAIE).

It belongs to the NhaB Na(+)/H(+) (TC 2.A.34) antiporter family.

The protein resides in the cell inner membrane. It carries out the reaction 2 Na(+)(in) + 3 H(+)(out) = 2 Na(+)(out) + 3 H(+)(in). In terms of biological role, na(+)/H(+) antiporter that extrudes sodium in exchange for external protons. The protein is Na(+)/H(+) antiporter NhaB of Shewanella sp. (strain MR-4).